Here is a 54-residue protein sequence, read N- to C-terminus: MSPQTETKASVGFKAGVKDYKLTYYTPDYETKDTDILAAFRVTPQXXVPPEEAG.

Residues 1–2 (MS) constitute a propeptide that is removed on maturation. Proline 3 is subject to N-acetylproline. Residue lysine 14 is modified to N6,N6,N6-trimethyllysine.

Belongs to the RuBisCO large chain family. Type I subfamily. As to quaternary structure, heterohexadecamer of 8 large chains and 8 small chains.

The protein resides in the plastid. The protein localises to the chloroplast. It catalyses the reaction 2 (2R)-3-phosphoglycerate + 2 H(+) = D-ribulose 1,5-bisphosphate + CO2 + H2O. The enzyme catalyses D-ribulose 1,5-bisphosphate + O2 = 2-phosphoglycolate + (2R)-3-phosphoglycerate + 2 H(+). In terms of biological role, ruBisCO catalyzes two reactions: the carboxylation of D-ribulose 1,5-bisphosphate, the primary event in carbon dioxide fixation, as well as the oxidative fragmentation of the pentose substrate in the photorespiration process. Both reactions occur simultaneously and in competition at the same active site. This is Ribulose bisphosphate carboxylase large chain (rbcL) from Colletia hystrix (Crucifixion thorn).